We begin with the raw amino-acid sequence, 182 residues long: MYKWYVVQVFTAQEKKVKKALEDFKESSGMTDFIQEIILPIENVMEVKKGEHKVVEKYIWPGYLLVKMHLTDESWLYVKSTAGIVEFLGGGVPVALSEDEVRSILTDIEEKKSGVVQKHQFEVGSRVKINDGVFVNFIGTVSEVFHDKGRLSVMVSIFGRETRVDDLEFWQVEEVAPGQESE.

This sequence belongs to the NusG family.

Its function is as follows. Participates in transcription elongation, termination and antitermination. This is Transcription termination/antitermination protein NusG from Chlamydia pneumoniae (Chlamydophila pneumoniae).